The chain runs to 985 residues: MTKKRVHELAKELNIENKELINKLMQIGISVKSHMSALENDAVEKVYHQYGKKQEKSSDSANKQIQREHGRGQGMEDKKEKDQLFRPDNAKGPGLVDRVPNRPPDRRYEDKAKVAQKPAQELRGSKTTTNSENEQTAPRQGSAQQSGQGRPQANRPQGSQGRPYGGRPQGGQSRPYGDRPQGGQGRPYGDRPQGGQGRPYGDRPQGGQGRPYGDRPQGGQGRPYGDRPQGGQGRPYGDRPQGGQGRPYGDRPQGGQSRPYGDRPQGGQGRPYGDRPQGGQSRPYGDRPQGGQGRPYGDRPQGGQGRHYGDRPQGGQGRPQGAGRPGANRGAGPSIPKPPEQVAQPKPTKAPDKTKGDRRKNYEKDGKWADGQIEKNKLFKGRNNKNKKRQHQQSAPPPILDKKPVQIAEVITVQELAEKLKKTAAEVIKKLMGLGVLATINQEVDFETATLIAGEYGIETELKVAVDKEALVMAEPEEDEDKLVLRPPVVTIMGHVDHGKTSLLDAIRETNVTAGEAGGITQHIGAYQVERNGKKITFVDTPGHAAFTSMRARGAQITDIAILVVAADDGVMPQTIEAINHAKAANVPIIVAINKMDKPDANPDKVKQELTQHELVVEDWGGDVIAVPVSAKNRTGLDNLLEMILLVAEVHELKANPDRMARGTVVEAELDKGRGPVATVLVQNGTLNVGDTIVVGQVSGRVRAMIDDKGRRVKKAPPSTPVEILGLSDVPEAGDILVAVEDEKLARDVAEKRKIRKREEGLKSSTKISLDDLFKHIQEGQIKELPIIVKADVQGSIEALAQALEKLTTEEVKVNLIHTGVGAVNETDIMLATASNAIVIGFNVRPDNNARKLADAEKVDINLYRVIYEVIDDVKKAMSGLLDPEFKEVVLGHVEVRKTFKASKIGTIAGGYVTEGKIVRDASVRVIRDGIVVFEGKLDSLKRFKDDAKEVAQGYECGLTIDRFNDVQEGDIIEAFTMEAIKREI.

Basic and acidic residues-rich tracts occupy residues Q49–S58, I65–N89, and V99–K113. Positions Q49–D401 are disordered. Residues S125–T136 are compositionally biased toward polar residues. Positions A137–R162 are enriched in low complexity. 2 stretches are compositionally biased toward gly residues: residues P180 to R246 and P288 to R324. Positions K349 to K377 are enriched in basic and acidic residues. Basic residues predominate over residues L378–H391. Residues L485–K654 form the tr-type G domain. The segment at G494 to T501 is G1. G494–T501 lines the GTP pocket. Positions G519–H523 are G2. A G3 region spans residues D540–G543. GTP-binding positions include D540–H544 and N594–D597. Residues N594 to D597 form a G4 region. The interval S630–K632 is G5.

The protein belongs to the TRAFAC class translation factor GTPase superfamily. Classic translation factor GTPase family. IF-2 subfamily.

The protein localises to the cytoplasm. One of the essential components for the initiation of protein synthesis. Protects formylmethionyl-tRNA from spontaneous hydrolysis and promotes its binding to the 30S ribosomal subunits. Also involved in the hydrolysis of GTP during the formation of the 70S ribosomal complex. In Desulforamulus reducens (strain ATCC BAA-1160 / DSM 100696 / MI-1) (Desulfotomaculum reducens), this protein is Translation initiation factor IF-2.